The sequence spans 638 residues: Actin-regulating kinase 1 (638 aa).

The Protein kinase domain occupies 22–298; it reads VEIIKYLTSG…VYQLLKRISI (277 aa). ATP contacts are provided by residues 28 to 36 and Lys56; that span reads LTSGGFAQV. Residue Asp159 is the Proton acceptor of the active site. Position 478 is a phosphoserine (Ser478). Positions 482–515 are enriched in polar residues; it reads YSTRGNIKKNQSVKESLTSSSLPGTSFTPTSTKV. The interval 482-518 is disordered; that stretch reads YSTRGNIKKNQSVKESLTSSSLPGTSFTPTSTKVNLK. 2 positions are modified to phosphoserine: Ser522 and Ser535. The segment at 569-638 is disordered; it reads SEESFNARKM…LAGRKLSLDK (70 aa). Basic and acidic residues predominate over residues 582–593; that stretch reads KLHEKGEIDKPT. The tract at residues 602–615 is interaction with SH3 domain of ABP1; sequence SKDKKTKPTPPPKP.

This sequence belongs to the protein kinase superfamily. Ser/Thr protein kinase family. As to quaternary structure, interacts with ABP1, which is required for proper actin patch localization.

It is found in the cytoplasm. The protein localises to the cytoskeleton. The protein resides in the actin patch. The catalysed reaction is L-seryl-[protein] + ATP = O-phospho-L-seryl-[protein] + ADP + H(+). It carries out the reaction L-threonyl-[protein] + ATP = O-phospho-L-threonyl-[protein] + ADP + H(+). In terms of biological role, involved in regulation of actin cytoskeleton organization and endocytosis. In Saccharomyces cerevisiae (strain ATCC 204508 / S288c) (Baker's yeast), this protein is Actin-regulating kinase 1 (ARK1).